The primary structure comprises 335 residues: MIEADRLIDATEKPNEDSIDRAIRPKLLADYRGQPHVKQQMEIFIEAARSRGEALDHLLIFGPPGLGKTTLANIVANELQVNIKATSGPVLEKAGDLAALLTNLEEGDVLFIDEIHRLSPQVEEILYPAMEDYQLDIMIGEGPAARSIKLDLPSFTLIGATTRAGSLTSPLRDRFGIVQRLEFYSVEDLSYIVGRSAHFLDLEMCDEGAVEIAKRSRGTPRIANRLLRRVRDYTQVKSDGTVNAEVAELALNMIDVDKSGFDYMDRKYLLAIIEKFMGGPVGLDNIAAAIGEEKETIEDVIEPFLIQQGFIQRTPRGRIVSDNAYHHFGLLPKQD.

A large ATPase domain (RuvB-L) region spans residues 4–184 (ADRLIDATEK…FGIVQRLEFY (181 aa)). Residues I23, R24, G65, K68, T69, T70, 131–133 (EDY), R174, Y184, and R221 each bind ATP. A Mg(2+)-binding site is contributed by T69. The tract at residues 185-255 (SVEDLSYIVG…VAELALNMID (71 aa)) is small ATPAse domain (RuvB-S). The head domain (RuvB-H) stretch occupies residues 258–335 (KSGFDYMDRK…HHFGLLPKQD (78 aa)). Residues R313 and R318 each coordinate DNA.

Belongs to the RuvB family. In terms of assembly, homohexamer. Forms an RuvA(8)-RuvB(12)-Holliday junction (HJ) complex. HJ DNA is sandwiched between 2 RuvA tetramers; dsDNA enters through RuvA and exits via RuvB. An RuvB hexamer assembles on each DNA strand where it exits the tetramer. Each RuvB hexamer is contacted by two RuvA subunits (via domain III) on 2 adjacent RuvB subunits; this complex drives branch migration. In the full resolvosome a probable DNA-RuvA(4)-RuvB(12)-RuvC(2) complex forms which resolves the HJ.

The protein resides in the cytoplasm. The enzyme catalyses ATP + H2O = ADP + phosphate + H(+). In terms of biological role, the RuvA-RuvB-RuvC complex processes Holliday junction (HJ) DNA during genetic recombination and DNA repair, while the RuvA-RuvB complex plays an important role in the rescue of blocked DNA replication forks via replication fork reversal (RFR). RuvA specifically binds to HJ cruciform DNA, conferring on it an open structure. The RuvB hexamer acts as an ATP-dependent pump, pulling dsDNA into and through the RuvAB complex. RuvB forms 2 homohexamers on either side of HJ DNA bound by 1 or 2 RuvA tetramers; 4 subunits per hexamer contact DNA at a time. Coordinated motions by a converter formed by DNA-disengaged RuvB subunits stimulates ATP hydrolysis and nucleotide exchange. Immobilization of the converter enables RuvB to convert the ATP-contained energy into a lever motion, pulling 2 nucleotides of DNA out of the RuvA tetramer per ATP hydrolyzed, thus driving DNA branch migration. The RuvB motors rotate together with the DNA substrate, which together with the progressing nucleotide cycle form the mechanistic basis for DNA recombination by continuous HJ branch migration. Branch migration allows RuvC to scan DNA until it finds its consensus sequence, where it cleaves and resolves cruciform DNA. The chain is Holliday junction branch migration complex subunit RuvB from Pseudoalteromonas translucida (strain TAC 125).